A 394-amino-acid chain; its full sequence is Flavohemoprotein (394 aa).

The Globin domain maps to 1–136; that stretch reads MLSENTINIV…LANVFIQREE (136 aa). His85 provides a ligand contact to heme b. Residues Tyr95 and Glu135 each act as charge relay system in the active site. Residues 147–394 form a reductase region; sequence GGWRGLREFE…YECFGPHKVV (248 aa). One can recognise an FAD-binding FR-type domain in the interval 150–255; that stretch reads RGLREFELVE…AAPAGDFFLD (106 aa). Residues Tyr188 and 204 to 207 each bind FAD; that span reads RQYS. 268 to 273 lines the NADP(+) pocket; sequence GVGLTP. 387–390 contributes to the FAD binding site; sequence CFGP.

Belongs to the globin family. Two-domain flavohemoproteins subfamily. The protein in the C-terminal section; belongs to the flavoprotein pyridine nucleotide cytochrome reductase family. The cofactor is heme b. FAD serves as cofactor.

It carries out the reaction 2 nitric oxide + NADPH + 2 O2 = 2 nitrate + NADP(+) + H(+). It catalyses the reaction 2 nitric oxide + NADH + 2 O2 = 2 nitrate + NAD(+) + H(+). In terms of biological role, is involved in NO detoxification in an aerobic process, termed nitric oxide dioxygenase (NOD) reaction that utilizes O(2) and NAD(P)H to convert NO to nitrate, which protects the bacterium from various noxious nitrogen compounds. Therefore, plays a central role in the inducible response to nitrosative stress. This is Flavohemoprotein from Vibrio vulnificus (strain CMCP6).